The primary structure comprises 255 residues: Acetylglutamate kinase (255 aa).

Substrate-binding positions include 40–41, R62, and N153; that span reads GG.

This sequence belongs to the acetylglutamate kinase family. ArgB subfamily.

Its subcellular location is the cytoplasm. The enzyme catalyses N-acetyl-L-glutamate + ATP = N-acetyl-L-glutamyl 5-phosphate + ADP. The protein operates within amino-acid biosynthesis; L-arginine biosynthesis; N(2)-acetyl-L-ornithine from L-glutamate: step 2/4. Its function is as follows. Catalyzes the ATP-dependent phosphorylation of N-acetyl-L-glutamate. This Bacillus thuringiensis (strain Al Hakam) protein is Acetylglutamate kinase.